Reading from the N-terminus, the 70-residue chain is Exodeoxyribonuclease 7 small subunit (70 aa).

It belongs to the XseB family. Heterooligomer composed of large and small subunits.

It is found in the cytoplasm. The catalysed reaction is Exonucleolytic cleavage in either 5'- to 3'- or 3'- to 5'-direction to yield nucleoside 5'-phosphates.. In terms of biological role, bidirectionally degrades single-stranded DNA into large acid-insoluble oligonucleotides, which are then degraded further into small acid-soluble oligonucleotides. The polypeptide is Exodeoxyribonuclease 7 small subunit (Magnetococcus marinus (strain ATCC BAA-1437 / JCM 17883 / MC-1)).